A 37-amino-acid polypeptide reads, in one-letter code: MKIRTSVKVICDKCKLIKRFGIIRVICVNPKHKQRQG.

The protein belongs to the bacterial ribosomal protein bL36 family.

The sequence is that of Large ribosomal subunit protein bL36 from Treponema pallidum (strain Nichols).